The following is a 393-amino-acid chain: Short-chain dehydrogenase/reductase family 42E member 1 (393 aa).

Y152 functions as the Proton acceptor in the catalytic mechanism. Residue K156 coordinates NAD(+). A run of 2 helical transmembrane segments spans residues 282–302 (LPLTLIYCFAFLTEMTHFILG) and 371–391 (GLVILLVVTVVLVWLLPSVIL).

It belongs to the 3-beta-HSD family.

The protein localises to the membrane. The sequence is that of Short-chain dehydrogenase/reductase family 42E member 1 (SDR42E1) from Bos taurus (Bovine).